A 306-amino-acid polypeptide reads, in one-letter code: Ribonuclease Z (306 aa).

7 residues coordinate Zn(2+): H63, H65, D67, H68, H141, D211, and H269. The Proton acceptor role is filled by D67.

Belongs to the RNase Z family. Homodimer. It depends on Zn(2+) as a cofactor.

The enzyme catalyses Endonucleolytic cleavage of RNA, removing extra 3' nucleotides from tRNA precursor, generating 3' termini of tRNAs. A 3'-hydroxy group is left at the tRNA terminus and a 5'-phosphoryl group is left at the trailer molecule.. Zinc phosphodiesterase, which displays some tRNA 3'-processing endonuclease activity. Probably involved in tRNA maturation, by removing a 3'-trailer from precursor tRNA. The protein is Ribonuclease Z of Staphylococcus aureus (strain bovine RF122 / ET3-1).